Consider the following 359-residue polypeptide: Guanine nucleotide-binding protein G(q) subunit alpha (359 aa).

2 S-palmitoyl cysteine lipidation sites follow: Cys9 and Cys10. The 322-residue stretch at 38–359 (RELKLLLLGT…QLNLKEYNLV (322 aa)) folds into the G-alpha domain. Positions 41-54 (KLLLLGTGESGKST) are G1 motif. GTP contacts are provided by Ser50, Gly51, Lys52, Ser53, Thr54, Ser156, Leu180, Arg181, and Arg183. Ser53 lines the Mg(2+) pocket. Positions 178–186 (DVLRVRVPT) are G2 motif. Thr186 provides a ligand contact to Mg(2+). The segment at 201–210 (FRMVDVGGQR) is G3 motif. The residue at position 209 (Gln209) is a 5-glutamyl histamine. The interval 270-277 (ILFLNKKD) is G4 motif. The GTP site is built by Asn274, Lys275, Asp277, and Ala331. Residues 329–334 (TCATDT) form a G5 motif region.

Belongs to the G-alpha family. G(q) subfamily. G proteins are composed of 3 units; alpha, beta and gamma. The alpha chain contains the guanine nucleotide binding site. Interacts (GDP-bound form) with RIC8A (via C-terminus); promoting GNAQ folding and association with the plasma membrane. Binds NHERF1. Forms a complex with PECAM1 and BDKRB2. Interacts with GAS2L2. Post-translationally, palmitoylated by ZDHHC3 and ZDHHC7. Palmitoylation occurs in the Golgi and participates in the localization of GNAQ to the plasma membrane. In terms of processing, histaminylated at Gln-209 residues by TGM2.

It localises to the cell membrane. The protein localises to the golgi apparatus. It is found in the nucleus. Its subcellular location is the nucleus membrane. It catalyses the reaction GTP + H2O = GDP + phosphate + H(+). Its function is as follows. Guanine nucleotide-binding proteins (G proteins) function as transducers downstream of G protein-coupled receptors (GPCRs) in numerous signaling cascades. The alpha chain contains the guanine nucleotide binding site and alternates between an active, GTP-bound state and an inactive, GDP-bound state. Signaling by an activated GPCR promotes GDP release and GTP binding. The alpha subunit has a low GTPase activity that converts bound GTP to GDP, thereby terminating the signal. Both GDP release and GTP hydrolysis are modulated by numerous regulatory proteins. Signaling is mediated via phospholipase C-beta-dependent inositol lipid hydrolysis for signal propagation: activates phospholipase C-beta: following GPCR activation, GNAQ activates PLC-beta (PLCB1, PLCB2, PLCB3 or PLCB4), leading to production of diacylglycerol (DAG) and inositol 1,4,5-trisphosphate (IP3). Required for platelet activation. Regulates B-cell selection and survival and is required to prevent B-cell-dependent autoimmunity. Regulates chemotaxis of BM-derived neutrophils and dendritic cells (in vitro). Transduces FFAR4 signaling in response to long-chain fatty acids (LCFAs). Together with GNA11, required for heart development. In Rattus norvegicus (Rat), this protein is Guanine nucleotide-binding protein G(q) subunit alpha (Gnaq).